Reading from the N-terminus, the 132-residue chain is Agouti-signaling protein (132 aa).

The first 22 residues, 1-22 (MDVTRLLLATLLVFLCFFAAYS), serve as a signal peptide directing secretion. Residue N39 is glycosylated (N-linked (GlcNAc...) asparagine). The interval 61–93 (KISRKEAEKKRSSKKEASKQKVARPRTPLSVPC) is disordered. Residues 64-79 (RKEAEKKRSSKKEASK) are compositionally biased toward basic and acidic residues. Cystine bridges form between C93–C108, C100–C114, C107–C125, C111–C132, and C116–C123. The Agouti domain maps to 93–132 (CVSTRGSCKPPAPACCHPCASCQCRFFRSACSCRVLNVNC).

The protein resides in the secreted. Its function is as follows. Involved in the regulation of melanogenesis. The binding of ASP to MC1R precludes alpha-MSH initiated signaling and thus blocks production of cAMP, leading to a down-regulation of eumelanogenesis (brown/black pigment) and thus increasing synthesis of pheomelanin (yellow/red pigment). The polypeptide is Agouti-signaling protein (ASIP) (Callithrix geoffroyi (Geoffroy's marmoset)).